A 722-amino-acid chain; its full sequence is NCK-interacting protein with SH3 domain (722 aa).

In terms of domain architecture, SH3 spans 1–58; sequence MYRALYAFRSAEPNALAFAAGETFLVLERSSAHWWLAARARSGETGYVPPAYLRRLQG. Disordered regions lie at residues 101–122 and 149–286; these read KETL…SSTS and PSSE…ASDD. The span at 110–121 shows a compositional bias: low complexity; it reads SASSVAVMTSST. A Phosphoserine modification is found at Ser-120. Over residues 169–185 the composition is skewed to pro residues; sequence QIPPQPRRAAPTTPPPP. The Nuclear localization signal motif lies at 175–192; it reads RRAAPTTPPPPVKRRDRE. At Thr-181 the chain carries Phosphothreonine. A compositionally biased stretch (low complexity) spans 206-240; sequence PSGGNSVSSGSSVSSTSLDTLYTSSSPSEPGSSCS. At Ser-294 the chain carries Phosphoserine.

Associates with the intermediate filaments, vimentin and desmin. Binds the first and third SH3 domains of NCK. Binds the proline-rich domains of N-WASP through its SH3 domain. Similarly, binds diaphanous protein homolog 1 (DRF1). Binds the SH3 domains of GRB2 through its proline-rich domains. Interacts with Helicobacter pylori toxin vacA. Isoform 4 interacts with FHOD1. Interacts with FASLG. Interacts with TMIGD2. Highest expression in heart, brain, skeletal muscle, kidney and liver. Lower levels in placenta, lung, small intestine and leukocytes. Weak expression in colon, thymus and spleen.

The protein resides in the nucleus. Its function is as follows. Has an important role in stress fiber formation induced by active diaphanous protein homolog 1 (DRF1). Induces microspike formation, in vivo. In vitro, stimulates N-WASP-induced ARP2/3 complex activation in the absence of CDC42. May play an important role in the maintenance of sarcomeres and/or in the assembly of myofibrils into sarcomeres. Implicated in regulation of actin polymerization and cell adhesion. Plays a role in angiogenesis. In Homo sapiens (Human), this protein is NCK-interacting protein with SH3 domain (NCKIPSD).